The following is a 182-amino-acid chain: Large ribosomal subunit protein uL6 (182 aa).

Belongs to the universal ribosomal protein uL6 family. As to quaternary structure, part of the 50S ribosomal subunit.

This protein binds to the 23S rRNA, and is important in its secondary structure. It is located near the subunit interface in the base of the L7/L12 stalk, and near the tRNA binding site of the peptidyltransferase center. This Methanococcus maripaludis (strain C7 / ATCC BAA-1331) protein is Large ribosomal subunit protein uL6.